A 452-amino-acid chain; its full sequence is tRNA-2-methylthio-N(6)-dimethylallyladenosine synthase (452 aa).

The MTTase N-terminal domain maps to 16–134; that stretch reads KRFFISTWGC…LPEYIERVKT (119 aa). C25, C61, C95, C171, C175, and C178 together coordinate [4Fe-4S] cluster. One can recognise a Radical SAM core domain in the interval 157–387; the sequence is RKSDIKAFVT…VEAVNEIMAR (231 aa). Residues 390–452 enclose the TRAM domain; sequence KEFEGKTVEV…NSFSLTGEII (63 aa).

Belongs to the methylthiotransferase family. MiaB subfamily. As to quaternary structure, monomer. It depends on [4Fe-4S] cluster as a cofactor.

Its subcellular location is the cytoplasm. It catalyses the reaction N(6)-dimethylallyladenosine(37) in tRNA + (sulfur carrier)-SH + AH2 + 2 S-adenosyl-L-methionine = 2-methylsulfanyl-N(6)-dimethylallyladenosine(37) in tRNA + (sulfur carrier)-H + 5'-deoxyadenosine + L-methionine + A + S-adenosyl-L-homocysteine + 2 H(+). Functionally, catalyzes the methylthiolation of N6-(dimethylallyl)adenosine (i(6)A), leading to the formation of 2-methylthio-N6-(dimethylallyl)adenosine (ms(2)i(6)A) at position 37 in tRNAs that read codons beginning with uridine. The chain is tRNA-2-methylthio-N(6)-dimethylallyladenosine synthase from Clostridium novyi (strain NT).